Reading from the N-terminus, the 248-residue chain is Proteasome subunit alpha (248 aa).

Belongs to the peptidase T1A family. In terms of assembly, the 20S proteasome core is composed of 14 alpha and 14 beta subunits that assemble into four stacked heptameric rings, resulting in a barrel-shaped structure. The two inner rings, each composed of seven catalytic beta subunits, are sandwiched by two outer rings, each composed of seven alpha subunits. The catalytic chamber with the active sites is on the inside of the barrel. Has a gated structure, the ends of the cylinder being occluded by the N-termini of the alpha-subunits. Is capped by the proteasome-associated ATPase, ARC.

The protein resides in the cytoplasm. Its pathway is protein degradation; proteasomal Pup-dependent pathway. Its activity is regulated as follows. The formation of the proteasomal ATPase ARC-20S proteasome complex, likely via the docking of the C-termini of ARC into the intersubunit pockets in the alpha-rings, may trigger opening of the gate for substrate entry. Interconversion between the open-gate and close-gate conformations leads to a dynamic regulation of the 20S proteasome proteolysis activity. In terms of biological role, component of the proteasome core, a large protease complex with broad specificity involved in protein degradation. The polypeptide is Proteasome subunit alpha (Mycobacterium bovis (strain BCG / Pasteur 1173P2)).